Consider the following 228-residue polypeptide: UPF0056 membrane protein MJ0972 (228 aa).

The next 5 helical transmembrane spans lie at 22-42, 68-88, 133-153, 163-183, and 201-221; these read FYIY…LIPI, VVLL…GITI, VPLA…MILI, GVVV…LSLT, and IMGL…IVGL.

The protein belongs to the UPF0056 (MarC) family.

The protein localises to the cell membrane. The protein is UPF0056 membrane protein MJ0972 of Methanocaldococcus jannaschii (strain ATCC 43067 / DSM 2661 / JAL-1 / JCM 10045 / NBRC 100440) (Methanococcus jannaschii).